A 368-amino-acid chain; its full sequence is tRNA-specific 2-thiouridylase MnmA (368 aa).

ATP is bound by residues 12-19 (AMSGGVDS) and Met-38. Cys-110 serves as the catalytic Nucleophile. An intrachain disulfide couples Cys-110 to Cys-207. Gly-134 is a binding site for ATP. The tract at residues 157-159 (KDQ) is interaction with tRNA. Cys-207 (cysteine persulfide intermediate) is an active-site residue. Residues 312–313 (RY) are interaction with tRNA.

This sequence belongs to the MnmA/TRMU family.

It is found in the cytoplasm. The catalysed reaction is S-sulfanyl-L-cysteinyl-[protein] + uridine(34) in tRNA + AH2 + ATP = 2-thiouridine(34) in tRNA + L-cysteinyl-[protein] + A + AMP + diphosphate + H(+). In terms of biological role, catalyzes the 2-thiolation of uridine at the wobble position (U34) of tRNA, leading to the formation of s(2)U34. This is tRNA-specific 2-thiouridylase MnmA from Geobacter metallireducens (strain ATCC 53774 / DSM 7210 / GS-15).